We begin with the raw amino-acid sequence, 735 residues long: Transcription initiation factor IIF subunit alpha (735 aa).

Disordered regions lie at residues 1 to 68 (MSRR…EYAE), 165 to 263 (EYKK…TANL), 297 to 323 (NEPE…AKRG), 446 to 465 (KAVA…NSEV), 471 to 606 (EEFA…HKEP), and 631 to 674 (PEGE…EETP). Positions 33–54 (RMRMGQNGSNSSSPGVPNGDNS) are enriched in low complexity. Composition is skewed to basic and acidic residues over residues 59–68 (VKKDDPEYAE) and 165–174 (EYKKKAEQER). A compositionally biased stretch (polar residues) spans 175–219 (STPNSGGMNKSGTVSLNNTVKDGSQTPTVDSVTKDNTANGVNSSI). Ser-198 is modified (phosphoserine). Thr-200 is subject to Phosphothreonine. Residues 220-238 (PTVTGSSVPPASPTTVSAV) show a composition bias toward low complexity. Positions 239–263 (ESNGLSNGSTSAANGLDGNASTANL) are enriched in polar residues. Composition is skewed to acidic residues over residues 453–465 (AMDE…NSEV) and 471–480 (EEFADDEEAP). Residues 487–500 (QENKESEQRIKKEM) show a composition bias toward basic and acidic residues. The span at 513 to 522 (APSENEEDEL) shows a compositional bias: acidic residues. Ser-515 is modified (phosphoserine). A compositionally biased stretch (basic and acidic residues) spans 523 to 536 (FGEKKIDEDGERIK). Phosphoserine occurs at positions 560, 562, and 571. A compositionally biased stretch (basic and acidic residues) spans 564–583 (IENKENESPVKKEEDSDTLS). The span at 584-595 (KSKRSSPKKQQK) shows a compositional bias: basic residues. The span at 636 to 654 (NPQTTKAVDSSNNASNTVP) shows a compositional bias: polar residues. The residue at position 655 (Ser-655) is a Phosphoserine.

The protein belongs to the TFIIF alpha subunit family. In terms of assembly, TFIIF is composed of three different subunits: TFG1/RAP74, TFG2/RAP30 and TAF14. Phosphorylated on Ser and other residues by TAF1 and casein kinase II-like kinases.

Its subcellular location is the nucleus. Functionally, TFIIF is a general transcription initiation factor that binds to RNA polymerase II. Its functions include the recruitment of RNA polymerase II to the promoter bound DNA-TBP-TFIIB complex, decreasing the affinity of RNA polymerase II for non-specific DNA, allowing for the subsequent recruitment of TFIIE and TFIIH, and facilitating RNA polymerase II elongation. The chain is Transcription initiation factor IIF subunit alpha (TFG1) from Saccharomyces cerevisiae (strain ATCC 204508 / S288c) (Baker's yeast).